We begin with the raw amino-acid sequence, 406 residues long: Tryptophan synthase beta chain (406 aa).

The residue at position 99 (Lys99) is an N6-(pyridoxal phosphate)lysine.

It belongs to the TrpB family. In terms of assembly, tetramer of two alpha and two beta chains. The cofactor is pyridoxal 5'-phosphate.

The catalysed reaction is (1S,2R)-1-C-(indol-3-yl)glycerol 3-phosphate + L-serine = D-glyceraldehyde 3-phosphate + L-tryptophan + H2O. The protein operates within amino-acid biosynthesis; L-tryptophan biosynthesis; L-tryptophan from chorismate: step 5/5. Functionally, the beta subunit is responsible for the synthesis of L-tryptophan from indole and L-serine. Essential for production of nod factors and establishment of symbiosis. This Rhizobium etli (strain ATCC 51251 / DSM 11541 / JCM 21823 / NBRC 15573 / CFN 42) protein is Tryptophan synthase beta chain.